The chain runs to 445 residues: Arginine/agmatine antiporter (445 aa).

The Cytoplasmic portion of the chain corresponds to 1-12 (MSSDADAHKVGL). The helical transmembrane segment at 13 to 24 (IPVTLMVSGNIM) threads the bilayer. 3 residues coordinate L-arginine: I23, S26, and G27. The Helix-breaking GSG motif TM1 motif lies at 25-27 (GSG). Residues 25 to 42 (GSGVFLLPANLASTGGIA) lie on the Periplasmic side of the membrane. A helical transmembrane segment spans residues 43–61 (IYGWLVTIIGALGLSMVYA). The Cytoplasmic portion of the chain corresponds to 62 to 86 (KMSFLDPSPGGSYAYARRCFGPFLG). Residues 87 to 112 (YQTNVLYWLACWIGNIAMVVIGVGYL) traverse the membrane as a helical segment. A96, C97, and N101 together coordinate L-arginine. Over 113 to 124 (SYFFPILKDPLV) the chain is Periplasmic. A helical membrane pass occupies residues 125 to 142 (LTITCVVVLWIFVLLNIV). A topological domain (cytoplasmic) is located at residue G143. Residues 144 to 171 (PKMITRVQAVATVLALIPIVGIAVFGWF) traverse the membrane as a helical segment. The Periplasmic portion of the chain corresponds to 172 to 194 (WFRGETYMAAWNVSGLGTFGAIQ). A helical membrane pass occupies residues 195 to 207 (STLNVTLWSFIGV). 2 residues coordinate L-arginine: W202 and I205. The Helix-breaking GVESA motif TM6 signature appears at 206 to 210 (GVESA). Topologically, residues 208 to 226 (ESASVAAGVVKNPKRNVPI) are cytoplasmic. A helical membrane pass occupies residues 227-247 (ATIGGVLIAAVCYVLSTTAIM). Residues 248 to 277 (GMIPNAALRVSASPFGDAARMALGDTAGAI) are Periplasmic-facing. A helical transmembrane segment spans residues 278 to 301 (VSFCAAAGCLGSLGGWTLLAGQTA). W293 is an L-arginine binding site. Residues 302–323 (KAAADDGLFPPIFARVNKAGTP) lie on the Cytoplasmic side of the membrane. A helical membrane pass occupies residues 324–340 (VAGLIIVGILMTIFQLS). Topologically, residues 341–352 (SISPNATKEFGL) are periplasmic. The chain crosses the membrane as a helical span at residues 353-370 (VSSVSVIFTLVPYLYTCA). S357 is a binding site for L-arginine. Topologically, residues 371 to 388 (ALLLLGHGHFGKARPAYL) are cytoplasmic. The helical transmembrane segment at 389-404 (AVTTIAFLYCIWAVVG) threads the bilayer. At 405 to 407 (SGA) the chain is on the periplasmic side. A helical transmembrane segment spans residues 408–426 (KEVMWSFVTLMVITAMYAL). Over 427–445 (NYNRLHKNPYPLDAPISKD) the chain is Cytoplasmic.

It belongs to the amino acid-polyamine-organocation (APC) superfamily. Basic amino acid/polyamine antiporter (APA) (TC 2.A.3.2) family. As to quaternary structure, homodimer;each subunit has its own individual transport capacity.

The protein resides in the cell inner membrane. It carries out the reaction agmatine(in) + L-arginine(out) = agmatine(out) + L-arginine(in). In terms of biological role, major component of the acid-resistance (AR) system allowing enteric pathogens to survive the acidic environment in the stomach. Exchanges extracellular arginine for its intracellular decarboxylation product agmatine (Agm) thereby expelling intracellular protons. Probably undergoes several conformational states in order to translocate the substrate across the membrane; keeps the substrate accessible to only 1 side of the membrane at a time by opening and closing 3 membrane-internal gates. The sequence is that of Arginine/agmatine antiporter (adiC) from Escherichia coli O157:H7.